The following is a 274-amino-acid chain: Penicillin-insensitive murein endopeptidase (274 aa).

A signal peptide spans 1–19 (MKKTAIALLAWFVSSASLA). 3 cysteine pairs are disulfide-bonded: C44–C265, C187–C235, and C216–C223. Zn(2+) is bound by residues H110, H113, D120, D147, H150, and H211. The tract at residues 225 to 274 (DQPLPPPGDGCGAELQSWFEPPKLGTTKPEKKTPPPLPPSCQALLDEHVL) is disordered.

It belongs to the peptidase M74 family. Dimer. The cofactor is Zn(2+).

Its subcellular location is the periplasm. In terms of biological role, murein endopeptidase that cleaves the D-alanyl-meso-2,6-diamino-pimelyl amide bond that connects peptidoglycan strands. Likely plays a role in the removal of murein from the sacculus. This chain is Penicillin-insensitive murein endopeptidase, found in Salmonella paratyphi B (strain ATCC BAA-1250 / SPB7).